An 878-amino-acid polypeptide reads, in one-letter code: Alanine--tRNA ligase (878 aa).

Zn(2+) is bound by residues H558, H562, C663, and H667.

The protein belongs to the class-II aminoacyl-tRNA synthetase family. The cofactor is Zn(2+).

It is found in the cytoplasm. The catalysed reaction is tRNA(Ala) + L-alanine + ATP = L-alanyl-tRNA(Ala) + AMP + diphosphate. In terms of biological role, catalyzes the attachment of alanine to tRNA(Ala) in a two-step reaction: alanine is first activated by ATP to form Ala-AMP and then transferred to the acceptor end of tRNA(Ala). Also edits incorrectly charged Ser-tRNA(Ala) and Gly-tRNA(Ala) via its editing domain. This Mycoplasmopsis synoviae (strain 53) (Mycoplasma synoviae) protein is Alanine--tRNA ligase.